Reading from the N-terminus, the 85-residue chain is uncharacterized protein (85 aa).

Belongs to the ycf76 family.

It localises to the plastid. It is found in the chloroplast. This is an uncharacterized protein from Oryza sativa subsp. japonica (Rice).